The sequence spans 456 residues: tRNA modification GTPase MnmE (456 aa).

Residues arginine 24, glutamate 81, and lysine 120 each coordinate (6S)-5-formyl-5,6,7,8-tetrahydrofolate. Residues 216–379 form the TrmE-type G domain; it reads GMTVVIAGRP…LREHLKACMG (164 aa). Asparagine 226 is a K(+) binding site. GTP-binding positions include 226–231, 245–251, 270–273, 335–338, and 359–361; these read NAGKSS, TEIAGTT, DTAG, NKAD, and SAR. Position 230 (serine 230) interacts with Mg(2+). The K(+) site is built by threonine 245, isoleucine 247, and threonine 250. Threonine 251 lines the Mg(2+) pocket. Lysine 456 is a binding site for (6S)-5-formyl-5,6,7,8-tetrahydrofolate.

It belongs to the TRAFAC class TrmE-Era-EngA-EngB-Septin-like GTPase superfamily. TrmE GTPase family. As to quaternary structure, homodimer. Heterotetramer of two MnmE and two MnmG subunits. Requires K(+) as cofactor.

The protein localises to the cytoplasm. In terms of biological role, exhibits a very high intrinsic GTPase hydrolysis rate. Involved in the addition of a carboxymethylaminomethyl (cmnm) group at the wobble position (U34) of certain tRNAs, forming tRNA-cmnm(5)s(2)U34. In Pseudomonas syringae pv. syringae (strain B728a), this protein is tRNA modification GTPase MnmE.